A 411-amino-acid polypeptide reads, in one-letter code: LL-diaminopimelate aminotransferase (411 aa).

Positions 15 and 42 each coordinate substrate. Pyridoxal 5'-phosphate contacts are provided by residues Y72, 108–109 (SK), Y132, N187, Y218, and 246–248 (SFS). Substrate is bound by residues K109, Y132, and N187. K249 carries the N6-(pyridoxal phosphate)lysine modification. Pyridoxal 5'-phosphate-binding residues include R257 and N292. Residues N292 and R388 each coordinate substrate.

This sequence belongs to the class-I pyridoxal-phosphate-dependent aminotransferase family. LL-diaminopimelate aminotransferase subfamily. Homodimer. The cofactor is pyridoxal 5'-phosphate.

It carries out the reaction (2S,6S)-2,6-diaminopimelate + 2-oxoglutarate = (S)-2,3,4,5-tetrahydrodipicolinate + L-glutamate + H2O + H(+). The protein operates within amino-acid biosynthesis; L-lysine biosynthesis via DAP pathway; LL-2,6-diaminopimelate from (S)-tetrahydrodipicolinate (aminotransferase route): step 1/1. Involved in the synthesis of meso-diaminopimelate (m-DAP or DL-DAP), required for both lysine and peptidoglycan biosynthesis. Catalyzes the direct conversion of tetrahydrodipicolinate to LL-diaminopimelate. The chain is LL-diaminopimelate aminotransferase from Nostoc punctiforme (strain ATCC 29133 / PCC 73102).